The chain runs to 273 residues: Transposon Tn7 transposition protein TnsA (273 aa).

Residues Glu63 and Glu73 contribute to the active site. The segment at residues 90-108 is a DNA-binding region (H-T-H motif); the sequence is TRQIAIDSGIKHPVIRGVD. Asp114 is a catalytic residue. 3 residues coordinate Mg(2+): Asp114, Gln130, and Val131. The active site involves Lys132.

Heteromer with TnsB. Interacts with TnsC (via C-terminus); this interaction allows TnsA to bind donor DNA. It depends on Mg(2+) as a cofactor. The cofactor is Mn(2+).

Functionally, required for Tn7 transposition. Forms the transposase, together with TnsB. TnsA executes the 5'-DNA strand breakage reaction. TnsABC and TnsD promote high-frequency insertion of Tn7 into a specific target site known as att-Tn7 whereas TnsABC and TnsE promote low-frequency insertion into many different sites. This Escherichia coli protein is Transposon Tn7 transposition protein TnsA.